Reading from the N-terminus, the 365-residue chain is 3-dehydroquinate synthase (365 aa).

NAD(+) is bound by residues 106–110 (GVIGD), 130–131 (TT), Lys-142, Lys-151, and 169–172 (FFAT). Positions 184, 247, and 264 each coordinate Zn(2+).

It belongs to the sugar phosphate cyclases superfamily. Dehydroquinate synthase family. Requires Co(2+) as cofactor. It depends on Zn(2+) as a cofactor. NAD(+) serves as cofactor.

The protein localises to the cytoplasm. It carries out the reaction 7-phospho-2-dehydro-3-deoxy-D-arabino-heptonate = 3-dehydroquinate + phosphate. It participates in metabolic intermediate biosynthesis; chorismate biosynthesis; chorismate from D-erythrose 4-phosphate and phosphoenolpyruvate: step 2/7. Catalyzes the conversion of 3-deoxy-D-arabino-heptulosonate 7-phosphate (DAHP) to dehydroquinate (DHQ). This is 3-dehydroquinate synthase from Listeria monocytogenes serotype 4a (strain HCC23).